Reading from the N-terminus, the 101-residue chain is Large ribosomal subunit protein uL24 (101 aa).

Belongs to the universal ribosomal protein uL24 family. Part of the 50S ribosomal subunit.

Its function is as follows. One of two assembly initiator proteins, it binds directly to the 5'-end of the 23S rRNA, where it nucleates assembly of the 50S subunit. In terms of biological role, one of the proteins that surrounds the polypeptide exit tunnel on the outside of the subunit. This is Large ribosomal subunit protein uL24 from Streptococcus uberis (strain ATCC BAA-854 / 0140J).